Here is a 370-residue protein sequence, read N- to C-terminus: Ubiquitin-binding protein Rv1468c (370 aa).

Residues methionine 1–phenylalanine 72 are UBA. Residues methionine 1 to threonine 93 enclose the PE domain.

This sequence belongs to the mycobacterial PE family. PGRS subfamily. Interacts directly with host polyubiquitin in a UBA-dependent manner.

The protein resides in the secreted. It is found in the cell wall. The protein localises to the cell surface. Its function is as follows. Mediates direct binding of host ubiquitin (Ub) to the mycobacterial surface, which triggers host xenophagy. Interaction between Rv1468c and ubiquitin recruits autophagy receptor p62 to deliver mycobacteria into LC3-associated autophagosomes. It could be a viable evolutionary strategy adopted by M.tuberculosis to maintain long-term intracellular survival through self-controlling its intracellular bacterial loads to avoid excessive host inflammatory immune responses. This chain is Ubiquitin-binding protein Rv1468c, found in Mycobacterium tuberculosis (strain ATCC 25618 / H37Rv).